The chain runs to 524 residues: Glutamyl-tRNA(Gln) amidotransferase subunit A (524 aa).

Residues K109 and S184 each act as charge relay system in the active site. S208 acts as the Acyl-ester intermediate in catalysis.

It belongs to the amidase family. GatA subfamily. In terms of assembly, heterotrimer of A, B and C subunits.

The catalysed reaction is L-glutamyl-tRNA(Gln) + L-glutamine + ATP + H2O = L-glutaminyl-tRNA(Gln) + L-glutamate + ADP + phosphate + H(+). Its function is as follows. Allows the formation of correctly charged Gln-tRNA(Gln) through the transamidation of misacylated Glu-tRNA(Gln) in organisms which lack glutaminyl-tRNA synthetase. The reaction takes place in the presence of glutamine and ATP through an activated gamma-phospho-Glu-tRNA(Gln). The protein is Glutamyl-tRNA(Gln) amidotransferase subunit A of Tropheryma whipplei (strain Twist) (Whipple's bacillus).